The primary structure comprises 281 residues: DSC E3 ubiquitin ligase complex subunit 4 (281 aa).

4 helical membrane passes run 22 to 42 (LCYA…LLLL), 62 to 82 (LPLF…RMFF), 84 to 104 (LPTA…INFI), and 115 to 135 (FITS…ILIA). A compositionally biased stretch (polar residues) spans 145 to 154 (HIQASQSGLS). 2 disordered regions span residues 145–183 (HIQA…EDLQ) and 256–281 (NTNS…TNPI). Acidic residues predominate over residues 157 to 167 (DGDEEPSDLIT). The segment covering 168–183 (EDSRDTQQGQRQEDLQ) has biased composition (basic and acidic residues).

As to quaternary structure, component of the DSC E3 ubiquitin ligase complex composed of dsc1, dsc2, dsc3 and dsc4.

Its subcellular location is the endoplasmic reticulum membrane. The protein resides in the golgi apparatus membrane. It participates in protein modification; protein ubiquitination. Component of the DSC E3 ubiquitin ligase complex which is required for the sre1 transcriptional activator proteolytic cleavage to release the soluble transcription factor from the membrane in low oxygen or sterol conditions. The complex also plays an important role in the multivesicular body (MVB) pathway and functions in a post-endoplasmic reticulum pathway for protein degradation. This is DSC E3 ubiquitin ligase complex subunit 4 (dsc4) from Schizosaccharomyces pombe (strain 972 / ATCC 24843) (Fission yeast).